Reading from the N-terminus, the 294-residue chain is Tryptophan 2,3-dioxygenase (294 aa).

The interval 1-20 (MSEFKGCPFSGAASEAGTKA) is disordered. Substrate contacts are provided by residues 63–67 (FIVQH), Tyr125, and Arg129. His252 lines the heme pocket. Thr266 serves as a coordination point for substrate.

The protein belongs to the tryptophan 2,3-dioxygenase family. In terms of assembly, homotetramer. Requires heme as cofactor.

The catalysed reaction is L-tryptophan + O2 = N-formyl-L-kynurenine. It participates in amino-acid degradation; L-tryptophan degradation via kynurenine pathway; L-kynurenine from L-tryptophan: step 1/2. In terms of biological role, heme-dependent dioxygenase that catalyzes the oxidative cleavage of the L-tryptophan (L-Trp) pyrrole ring and converts L-tryptophan to N-formyl-L-kynurenine. Catalyzes the oxidative cleavage of the indole moiety. In Cupriavidus necator (strain ATCC 17699 / DSM 428 / KCTC 22496 / NCIMB 10442 / H16 / Stanier 337) (Ralstonia eutropha), this protein is Tryptophan 2,3-dioxygenase.